The following is a 135-amino-acid chain: Probable histone H2A.7 (135 aa).

The protein belongs to the histone H2A family. The nucleosome is a histone octamer containing two molecules each of H2A, H2B, H3 and H4 assembled in one H3-H4 heterotetramer and two H2A-H2B heterodimers. The octamer wraps approximately 147 bp of DNA.

The protein resides in the nucleus. The protein localises to the chromosome. In terms of biological role, core component of nucleosome. Nucleosomes wrap and compact DNA into chromatin, limiting DNA accessibility to the cellular machineries which require DNA as a template. Histones thereby play a central role in transcription regulation, DNA repair, DNA replication and chromosomal stability. DNA accessibility is regulated via a complex set of post-translational modifications of histones, also called histone code, and nucleosome remodeling. The polypeptide is Probable histone H2A.7 (Oryza sativa subsp. indica (Rice)).